The chain runs to 825 residues: Heterogeneous nuclear ribonucleoprotein U (825 aa).

S2 is modified (N-acetylserine; partial). Position 4 is a phosphoserine (S4). An SAP domain is found at V8 to L42. An N6-acetyllysine mark is found at K17 and K21. Positions A41–E281 are disordered. S59 is subject to Phosphoserine; by PLK1. A Phosphoserine modification is found at S66. The segment covering A72–G81 has biased composition (low complexity). Acidic residues-rich tracts occupy residues G82–G95, P120–D134, and E140–G153. Low complexity predominate over residues G159–G178. K186 carries the N6-acetyllysine modification. S187 is modified (ADP-ribosylserine). Positions A199 to G211 are enriched in low complexity. Position 215 is an N6-acetyllysine (K215). Residues G233 to Y266 are compositionally biased toward basic and acidic residues. R255 bears the Citrulline mark. Residue K265 is modified to N6-acetyllysine; alternate. A Glycyl lysine isopeptide (Lys-Gly) (interchain with G-Cter in SUMO1); alternate cross-link involves residue K265. K265 is covalently cross-linked (Glycyl lysine isopeptide (Lys-Gly) (interchain with G-Cter in SUMO2); alternate). Y266 is modified (phosphotyrosine). Residues S267 and S271 each carry the phosphoserine modification. A B30.2/SPRY domain is found at S267–K464. T286 bears the Phosphothreonine mark. K352 carries the N6-acetyllysine modification. An ATPase domain region spans residues P488–E672. K495 is covalently cross-linked (Glycyl lysine isopeptide (Lys-Gly) (interchain with G-Cter in SUMO2)). G504–T511 serves as a coordination point for ATP. Residues K516 and K524 each carry the N6-acetyllysine; alternate modification. Glycyl lysine isopeptide (Lys-Gly) (interchain with G-Cter in SUMO2); alternate cross-links involve residues K516 and K524. T532 carries the post-translational modification Phosphothreonine. K536 participates in a covalent cross-link: Glycyl lysine isopeptide (Lys-Gly) (interchain with G-Cter in SUMO2). K551 is modified (N6-acetyllysine). K565 is subject to N6-acetyllysine; alternate. Residue K565 forms a Glycyl lysine isopeptide (Lys-Gly) (interchain with G-Cter in SUMO2); alternate linkage. K574 is covalently cross-linked (Glycyl lysine isopeptide (Lys-Gly) (interchain with G-Cter in SUMO2)). Residue T582 is modified to Phosphothreonine. Glycyl lysine isopeptide (Lys-Gly) (interchain with G-Cter in SUMO2) cross-links involve residues K609 and K626. An actin-binding region spans residues E611 to K626. At K635 the chain carries N6-acetyllysine; alternate. Residue K635 forms a Glycyl lysine isopeptide (Lys-Gly) (interchain with G-Cter in SUMO2); alternate linkage. Residues K664 and K670 each participate in a glycyl lysine isopeptide (Lys-Gly) (interchain with G-Cter in SUMO2) cross-link. Positions E671–Q683 are enriched in basic and acidic residues. Positions E671–I749 are disordered. The residue at position 702 (R702) is an Omega-N-methylarginine. Gly residues predominate over residues G710 to G728. The RNA-binding RGG-box stretch occupies residues M714 to R739. An asymmetric dimethylarginine mark is found at R715, R720, and R727. 2 positions are modified to asymmetric dimethylarginine; alternate: R733 and R739. Omega-N-methylarginine; alternate is present on residues R733 and R739. R739 bears the Dimethylated arginine; in A2780 ovarian carcinoma cell line mark. Over residues R739–I749 the composition is skewed to gly residues. R755 and R762 each carry asymmetric dimethylarginine. Residues G769–S799 form a disordered region. A compositionally biased stretch (low complexity) spans N778–S799. At K814 the chain carries N6-acetyllysine; alternate. K814 is covalently cross-linked (Glycyl lysine isopeptide (Lys-Gly) (interchain with G-Cter in SUMO2); alternate).

In terms of assembly, oligomer (via ATPase domain and RNA-binding RGG-box region); oligomerization occurs upon ATP-binding in a chromatin-associated RNAs (caRNAs)- and transcription-dependent manner and is required for chromatin decompaction. ATP hydrolysis is required to cycle from an oligomeric to monomeric state to compact chromatin. Component of the coding region determinant (CRD)-mediated complex, composed of DHX9, HNRNPU, IGF2BP1, SYNCRIP and YBX1. Identified in the spliceosome C complex. Identified in a IGF2BP1-dependent mRNP granule complex containing untranslated mRNAs. Associates with heterogeneous nuclear ribonucleoprotein (hnRNP) particles. Associates (via middle region) with the C-terminal domain (CTD) RNA polymerase II (Pol II) holoenzyme; this association occurs in a RNA-independent manner. Associates (via middle region) with the core-TFIIH basal transcription factor complex; this association inhibits the CTD phosphorylation of RNA polymerase II holoenzyme by down-regulating TFIIH kinase activity. Associates with the telomerase holoenzyme complex. Associates with spindle microtubules (MTs) in a TPX2-dependent manner. Interacts (via C-terminus) with actin; this interaction is direct and mediates association with the phosphorylated CTD of RNA polymerase II and is disrupted in presence of the long non-coding H19 RNA. Interacts with AURKA. Interacts (via C-terminus) with CBX5; this interaction is, at least in part, RNA-dependent. Interacts with CR2. Interacts with CRY1. Interacts (via C-terminus) with EP300; this interaction enhances DNA-binding to nuclear scaffold/matrix attachment region (S/MAR) elements. Interacts with ERBB4. Interacts with GEMIN5. Interacts with IGF2BP1. Interacts with IGF2BP2 and IGF2BP3. Interacts with NCL; this interaction occurs during mitosis. Interacts (via C-terminus) with NR3C1 (via C-terminus). Interacts with PLK1; this interaction induces phosphorylation of HNRNPU at Ser-59 in mitosis. Interacts with POU3F4. Interacts with SMARCA4; this interaction occurs in embryonic stem cells and stimulates global Pol II-mediated transcription. Interacts (via C-terminus) with TOP2A; this interaction protects the topoisomerase TOP2A from degradation and positively regulates the relaxation of supercoiled DNA by TOP2A in a RNA-dependent manner. Interacts with TPX2; this interaction recruits HNRNPU to spindle microtubules (MTs). Interacts with UBQLN2. Interacts (via RNA-binding RGG-box region) with ZBTB7B; the interaction facilitates the recruitment of long non-coding RNA Blnc1 by ZBTB7B. Interacts with ERCC6. (Microbial infection) Interacts with HIV-1 protein Rev. Post-translationally, cleaved at Asp-100 by CASP3 during T-cell apoptosis, resulting in a loss of DNA- and chromatin-binding activities. In terms of processing, extensively phosphorylated. Phosphorylated on Ser-59 by PLK1 and dephosphorylated by protein phosphatase 2A (PP2A) in mitosis. Arg-739 is dimethylated, probably to asymmetric dimethylarginine. Arg-733 is dimethylated, probably to asymmetric dimethylarginine. Post-translationally, citrullinated by PADI4. Widely expressed.

The protein localises to the nucleus. It localises to the nucleus matrix. It is found in the chromosome. The protein resides in the nucleus speckle. Its subcellular location is the cytoplasm. The protein localises to the cytoskeleton. It localises to the microtubule organizing center. It is found in the centrosome. The protein resides in the centromere. Its subcellular location is the kinetochore. The protein localises to the spindle. It localises to the spindle pole. It is found in the midbody. The protein resides in the cell surface. Its subcellular location is the cytoplasmic granule. Functionally, DNA- and RNA-binding protein involved in several cellular processes such as nuclear chromatin organization, telomere-length regulation, transcription, mRNA alternative splicing and stability, Xist-mediated transcriptional silencing and mitotic cell progression. Plays a role in the regulation of interphase large-scale gene-rich chromatin organization through chromatin-associated RNAs (caRNAs) in a transcription-dependent manner, and thereby maintains genomic stability. Required for the localization of the long non-coding Xist RNA on the inactive chromosome X (Xi) and the subsequent initiation and maintenance of X-linked transcriptional gene silencing during X-inactivation. Plays a role as a RNA polymerase II (Pol II) holoenzyme transcription regulator. Promotes transcription initiation by direct association with the core-TFIIH basal transcription factor complex for the assembly of a functional pre-initiation complex with Pol II in a actin-dependent manner. Blocks Pol II transcription elongation activity by inhibiting the C-terminal domain (CTD) phosphorylation of Pol II and dissociates from Pol II pre-initiation complex prior to productive transcription elongation. Positively regulates CBX5-induced transcriptional gene silencing and retention of CBX5 in the nucleus. Negatively regulates glucocorticoid-mediated transcriptional activation. Key regulator of transcription initiation and elongation in embryonic stem cells upon leukemia inhibitory factor (LIF) signaling. Involved in the long non-coding RNA H19-mediated Pol II transcriptional repression. Participates in the circadian regulation of the core clock component BMAL1 transcription. Plays a role in the regulation of telomere length. Plays a role as a global pre-mRNA alternative splicing modulator by regulating U2 small nuclear ribonucleoprotein (snRNP) biogenesis. Plays a role in mRNA stability. Component of the CRD-mediated complex that promotes MYC mRNA stabilization. Enhances the expression of specific genes, such as tumor necrosis factor TNFA, by regulating mRNA stability, possibly through binding to the 3'-untranslated region (UTR). Plays a role in mitotic cell cycle regulation. Involved in the formation of stable mitotic spindle microtubules (MTs) attachment to kinetochore, spindle organization and chromosome congression. Phosphorylation at Ser-59 by PLK1 is required for chromosome alignement and segregation and progression through mitosis. Also contributes to the targeting of AURKA to mitotic spindle MTs. Binds to double- and single-stranded DNA and RNA, poly(A), poly(C) and poly(G) oligoribonucleotides. Binds to chromatin-associated RNAs (caRNAs). Associates with chromatin to scaffold/matrix attachment region (S/MAR) elements in a chromatin-associated RNAs (caRNAs)-dependent manner. Binds to the Xist RNA. Binds the long non-coding H19 RNA. Binds to SMN1/2 pre-mRNAs at G/U-rich regions. Binds to small nuclear RNAs (snRNAs). Binds to the 3'-UTR of TNFA mRNA. Binds (via RNA-binding RGG-box region) to the long non-coding Xist RNA; this binding is direct and bridges the Xist RNA and the inactive chromosome X (Xi). Also negatively regulates embryonic stem cell differentiation upon LIF signaling. Required for embryonic development. Binds to brown fat long non-coding RNA 1 (Blnc1); facilitates the recruitment of Blnc1 by ZBTB7B required to drive brown and beige fat development and thermogenesis. (Microbial infection) Negatively regulates immunodeficiency virus type 1 (HIV-1) replication by preventing the accumulation of viral mRNA transcripts in the cytoplasm. This Homo sapiens (Human) protein is Heterogeneous nuclear ribonucleoprotein U.